Reading from the N-terminus, the 246-residue chain is ABC transporter ATP-binding protein NatA (246 aa).

The ABC transporter domain occupies 2-237 (ITLTDCSRRF…ERSEDLNYIF (236 aa)). Position 38 to 45 (38 to 45 (GENGAGKT)) interacts with ATP.

It belongs to the ABC transporter superfamily. The complex is composed of NatA and NatB.

The catalysed reaction is Na(+)(in) + ATP + H2O = Na(+)(out) + ADP + phosphate + H(+). Its function is as follows. Part of an ABC transporter that catalyzes ATP-dependent electrogenic sodium extrusion. This chain is ABC transporter ATP-binding protein NatA, found in Bacillus subtilis (strain 168).